Reading from the N-terminus, the 308-residue chain is High-affinity branched-chain amino acid transport system permease protein LivH (308 aa).

Residues 1–21 lie on the Cytoplasmic side of the membrane; that stretch reads MSEQFLYFLQQMFNGVTLGST. The chain crosses the membrane as a helical span at residues 22–42; sequence YALIAIGYTMVYGIIGMINFA. Residues 43–45 are Periplasmic-facing; it reads HGE. A helical membrane pass occupies residues 46–66; sequence VYMIGSYVSFMIIAALMMMGI. The Cytoplasmic segment spans residues 67 to 70; sequence DTSW. Residues 71–91 traverse the membrane as a helical segment; sequence LLVAAGFIGAIIIASAYGWSI. The Periplasmic portion of the chain corresponds to 92–104; it reads ERVAYRPVRNSKR. Residues 105–125 form a helical membrane-spanning segment; sequence LIALISAIGMSIFLQNYVSLT. Topologically, residues 126–154 are cytoplasmic; the sequence is EGSRDVALPSLFNGQWIVGSSENFSASIT. The chain crosses the membrane as a helical span at residues 155-175; it reads TMQAVIWIVTFLAMLALTIFI. Topologically, residues 176-203 are periplasmic; the sequence is RYSRMGRACRACAEDLKMASLLGINTDR. A helical transmembrane segment spans residues 204 to 224; the sequence is VIALTFVIGAAMAAVAGVLLG. The Cytoplasmic portion of the chain corresponds to 225 to 246; sequence QFYGVINPYIGFMAGMKAFTAA. The chain crosses the membrane as a helical span at residues 247–266; sequence VLGGIGSIPGAMIGGLILGV. The Periplasmic segment spans residues 267–280; the sequence is AEALSSAYLSTEYK. A helical membrane pass occupies residues 281 to 301; the sequence is DVVSFALLILVLLVMPTGILG. The Cytoplasmic portion of the chain corresponds to 302-308; sequence RPEVEKV.

It belongs to the binding-protein-dependent transport system permease family. LivHM subfamily.

The protein localises to the cell inner membrane. Its function is as follows. Part of the binding-protein-dependent transport system for branched-chain amino acids. Probably responsible for the translocation of the substrates across the membrane. This chain is High-affinity branched-chain amino acid transport system permease protein LivH (livH), found in Salmonella typhimurium (strain LT2 / SGSC1412 / ATCC 700720).